Here is a 229-residue protein sequence, read N- to C-terminus: Potassium/proton antiporter CemA (229 aa).

Helical transmembrane passes span 6 to 26 (AFIP…ISLC), 107 to 127 (IFHF…SFWG), 152 to 172 (FLIL…GWEL), and 189 to 209 (ILSG…KYWI).

It belongs to the CemA family.

Its subcellular location is the plastid. It is found in the chloroplast inner membrane. The catalysed reaction is K(+)(in) + H(+)(out) = K(+)(out) + H(+)(in). Contributes to K(+)/H(+) antiport activity by supporting proton efflux to control proton extrusion and homeostasis in chloroplasts in a light-dependent manner to modulate photosynthesis. Prevents excessive induction of non-photochemical quenching (NPQ) under continuous-light conditions. Indirectly promotes efficient inorganic carbon uptake into chloroplasts. The chain is Potassium/proton antiporter CemA from Aethionema grandiflorum (Persian stone-cress).